The sequence spans 447 residues: Histidine--tRNA ligase (447 aa).

This sequence belongs to the class-II aminoacyl-tRNA synthetase family. In terms of assembly, homodimer.

The protein localises to the cytoplasm. The enzyme catalyses tRNA(His) + L-histidine + ATP = L-histidyl-tRNA(His) + AMP + diphosphate + H(+). This chain is Histidine--tRNA ligase (hisS), found in Synechocystis sp. (strain ATCC 27184 / PCC 6803 / Kazusa).